The sequence spans 92 residues: Small ribosomal subunit protein uS19 (92 aa).

The protein belongs to the universal ribosomal protein uS19 family.

In terms of biological role, protein S19 forms a complex with S13 that binds strongly to the 16S ribosomal RNA. In Lactococcus lactis subsp. cremoris (strain MG1363), this protein is Small ribosomal subunit protein uS19.